Here is a 199-residue protein sequence, read N- to C-terminus: Elongation factor Ts (199 aa).

The segment at 81–84 is involved in Mg(2+) ion dislocation from EF-Tu; that stretch reads TDFV.

Belongs to the EF-Ts family.

The protein resides in the cytoplasm. Functionally, associates with the EF-Tu.GDP complex and induces the exchange of GDP to GTP. It remains bound to the aminoacyl-tRNA.EF-Tu.GTP complex up to the GTP hydrolysis stage on the ribosome. The protein is Elongation factor Ts of Thermotoga sp. (strain RQ2).